Consider the following 397-residue polypeptide: Subtilisin-like protease 3 (397 aa).

An N-terminal signal peptide occupies residues 1–19 (MGCIKVISVFLAAIAAVDA). Residues 20–116 (RAFFHNRGGS…VEHDRVVKLA (97 aa)) constitute a propeptide that is removed on maturation. Residues 35-116 (SYIVVMKDGV…VEHDRVVKLA (82 aa)) enclose the Inhibitor I9 domain. The 272-residue stretch at 126 to 397 (TWGLGRVSHR…NRLLYNGSGQ (272 aa)) folds into the Peptidase S8 domain. Residues Asp-158 and His-189 each act as charge relay system in the active site. Asn-250 carries N-linked (GlcNAc...) asparagine glycosylation. Ser-344 acts as the Charge relay system in catalysis. N-linked (GlcNAc...) asparagine glycosylation is present at Asn-393.

It belongs to the peptidase S8 family.

Its subcellular location is the secreted. Its function is as follows. Secreted subtilisin-like serine protease with keratinolytic activity that contributes to pathogenicity. The sequence is that of Subtilisin-like protease 3 (SUB3) from Trichophyton equinum (Horse ringworm fungus).